The primary structure comprises 115 residues: Yop proteins translocation protein M (115 aa).

The interval 19-38 is disordered; sequence HGGQAGRLTETNPLTENSHQ. The span at 27–38 shows a compositional bias: polar residues; the sequence is TETNPLTENSHQ.

In terms of biological role, belongs to an operon involved in the translocation of Yop proteins across the bacterial membranes or in the specific control of this function. The sequence is that of Yop proteins translocation protein M (yscM) from Yersinia pestis.